We begin with the raw amino-acid sequence, 245 residues long: Probable metal transport system ATP-binding protein CPn_0542/CP_0210/CPj0542/CpB0563 (245 aa).

In terms of domain architecture, ABC transporter spans 5–240 (ILAEGLAFRY…CCHPYKNQEF (236 aa)). Residue 39–46 (GPNGGGKS) coordinates ATP.

The protein belongs to the ABC transporter superfamily.

The protein resides in the cell inner membrane. Its function is as follows. Part of an ATP-driven transport system CPn0541/CPn0542/CPn0543 for a metal. Probably responsible for energy coupling to the transport system. This Chlamydia pneumoniae (Chlamydophila pneumoniae) protein is Probable metal transport system ATP-binding protein CPn_0542/CP_0210/CPj0542/CpB0563.